Here is a 365-residue protein sequence, read N- to C-terminus: Flagellar P-ring protein (365 aa).

The N-terminal stretch at 1–19 (MIKFLSALILLLVITAAQA) is a signal peptide.

This sequence belongs to the FlgI family. The basal body constitutes a major portion of the flagellar organelle and consists of four rings (L,P,S, and M) mounted on a central rod.

The protein localises to the periplasm. Its subcellular location is the bacterial flagellum basal body. Functionally, assembles around the rod to form the L-ring and probably protects the motor/basal body from shearing forces during rotation. The polypeptide is Flagellar P-ring protein (Escherichia coli O81 (strain ED1a)).